Reading from the N-terminus, the 360-residue chain is 3-dehydroquinate synthase (360 aa).

NAD(+) contacts are provided by residues 72-77, 106-110, 130-131, K143, and K152; these read DGEEYK, GVIGD, and TT. Zn(2+) is bound by residues E185, H248, and H265.

Belongs to the sugar phosphate cyclases superfamily. Dehydroquinate synthase family. The cofactor is Co(2+). It depends on Zn(2+) as a cofactor. NAD(+) serves as cofactor.

It is found in the cytoplasm. It catalyses the reaction 7-phospho-2-dehydro-3-deoxy-D-arabino-heptonate = 3-dehydroquinate + phosphate. Its pathway is metabolic intermediate biosynthesis; chorismate biosynthesis; chorismate from D-erythrose 4-phosphate and phosphoenolpyruvate: step 2/7. Catalyzes the conversion of 3-deoxy-D-arabino-heptulosonate 7-phosphate (DAHP) to dehydroquinate (DHQ). This Geotalea uraniireducens (strain Rf4) (Geobacter uraniireducens) protein is 3-dehydroquinate synthase.